Reading from the N-terminus, the 317-residue chain is Transaldolase (317 aa).

Residue lysine 132 is the Schiff-base intermediate with substrate of the active site.

It belongs to the transaldolase family. Type 1 subfamily.

The protein resides in the cytoplasm. It carries out the reaction D-sedoheptulose 7-phosphate + D-glyceraldehyde 3-phosphate = D-erythrose 4-phosphate + beta-D-fructose 6-phosphate. It participates in carbohydrate degradation; pentose phosphate pathway; D-glyceraldehyde 3-phosphate and beta-D-fructose 6-phosphate from D-ribose 5-phosphate and D-xylulose 5-phosphate (non-oxidative stage): step 2/3. Functionally, transaldolase is important for the balance of metabolites in the pentose-phosphate pathway. The sequence is that of Transaldolase from Haemophilus influenzae (strain ATCC 51907 / DSM 11121 / KW20 / Rd).